A 317-amino-acid chain; its full sequence is Aspartate carbamoyltransferase catalytic subunit (317 aa).

2 residues coordinate carbamoyl phosphate: R64 and T65. Residue K92 participates in L-aspartate binding. Carbamoyl phosphate contacts are provided by R114, H142, and Q145. Residues R176 and R230 each contribute to the L-aspartate site. The carbamoyl phosphate site is built by G271 and P272.

Belongs to the aspartate/ornithine carbamoyltransferase superfamily. ATCase family. As to quaternary structure, heterododecamer (2C3:3R2) of six catalytic PyrB chains organized as two trimers (C3), and six regulatory PyrI chains organized as three dimers (R2).

The catalysed reaction is carbamoyl phosphate + L-aspartate = N-carbamoyl-L-aspartate + phosphate + H(+). Its pathway is pyrimidine metabolism; UMP biosynthesis via de novo pathway; (S)-dihydroorotate from bicarbonate: step 2/3. Functionally, catalyzes the condensation of carbamoyl phosphate and aspartate to form carbamoyl aspartate and inorganic phosphate, the committed step in the de novo pyrimidine nucleotide biosynthesis pathway. This chain is Aspartate carbamoyltransferase catalytic subunit, found in Nitratidesulfovibrio vulgaris (strain DP4) (Desulfovibrio vulgaris).